The chain runs to 2867 residues: Reticulocyte-binding protein 2 (2867 aa).

The N-terminal stretch at 1 to 21 is a signal peptide; it reads MEKNVLWVIFYNFLVILLASC. Residues 22-2805 lie on the Extracellular side of the membrane; the sequence is NDSNRSKSNS…TAKEAIGKTR (2784 aa). 3 disordered regions span residues 52 to 73, 2650 to 2682, and 2712 to 2799; these read KYNNAKTEDNIGNQINNDNNHN, ETKTSPSGMKAKEEKVPPKETENRAQDNLASVP, and DNTH…TAKE. The span at 61 to 73 shows a compositional bias: low complexity; the sequence is NIGNQINNDNNHN. Over residues 2659–2674 the composition is skewed to basic and acidic residues; sequence KAKEEKVPPKETENRA. Residues 2725-2736 show a composition bias toward polar residues; it reads DSISAPQEQVEY. Residues 2743–2754 show a composition bias toward acidic residues; it reads ENDETTEEESEH. The segment covering 2755–2799 has biased composition (basic and acidic residues); that stretch reads DDAHDDTHDDTHDDTHDDTHDDTHDDTHDDTHDESQTGRDSTAKE. Tandem repeats lie at residues 2758–2761, 2762–2765, 2766–2769, 2770–2773, 2774–2777, 2778–2781, and 2782–2785. The interval 2758–2785 is 7 X 4 AA tandem repeats of H-D-D-T; sequence HDDTHDDTHDDTHDDTHDDTHDDTHDDT. A helical membrane pass occupies residues 2806–2826; that stretch reads LAGAVIIAMSVLSGFIIIVFK. The Cytoplasmic portion of the chain corresponds to 2827 to 2867; that stretch reads DKDEEEKDHNEHGYNEAFGEHDEYNMHDKEEVIEVCFNEED.

It localises to the cell membrane. Functionally, involved in reticulocyte adhesion. Specifically binds to human reticulocyte cells. The protein is Reticulocyte-binding protein 2 (RBP-2) of Plasmodium vivax (strain Belem).